The sequence spans 428 residues: MVVSARAGIVVTGTEILTGRVRDRNGPWLADRLLELGVKLAHITICGDCPADIEAQLRFMAEAGVDLIVTSGGLGPTADDMTVEVVARFCNREMVLDVELENKIAAILNSLMTRFNPGDFEAVRAANRKQAMIPAGSQVLDPIGTAPGLVVPGKPTVMVLPGPPSELQPMWRRAVMTAATREAIADRTIYRQQTLRMFGLSESGLAETLRDAQASIPGFDALEITTCLRRGEIEMVTRYEPDVVNVYVELTQLLRDRHGHQLYSEDGARVDDLIAHLLAGRRIATAESCTAGLLAARLTERPGSSDYVAGALVAYSNEAKVTLLGVDPALIAEHGEVSEPVVEAMAAGALQRFDVDTAAAISGIAGPGGGTAEKPIGTVCFTVMLADGGPTLTRTLRLPGNRSDIRERSTTVAMHLLRHALSDTDSVP.

It belongs to the CinA family.

The chain is CinA-like protein from Mycobacterium leprae (strain TN).